Reading from the N-terminus, the 388-residue chain is Galactokinase (388 aa).

33-36 (EHTD) lines the substrate pocket. ATP contacts are provided by residues Ser67 and 124 to 130 (GSGLSSS). 2 residues coordinate Mg(2+): Ser130 and Glu162. Catalysis depends on Asp174, which acts as the Proton acceptor. Tyr224 is a substrate binding site.

It belongs to the GHMP kinase family. GalK subfamily.

It localises to the cytoplasm. It carries out the reaction alpha-D-galactose + ATP = alpha-D-galactose 1-phosphate + ADP + H(+). It participates in carbohydrate metabolism; galactose metabolism. Functionally, catalyzes the transfer of the gamma-phosphate of ATP to D-galactose to form alpha-D-galactose-1-phosphate (Gal-1-P). This Streptococcus thermophilus (strain ATCC BAA-491 / LMD-9) protein is Galactokinase.